Here is a 1290-residue protein sequence, read N- to C-terminus: 1-phosphatidylinositol 4,5-bisphosphate phosphodiesterase gamma-1 (1290 aa).

N-acetylalanine is present on A2. A PH 1 domain is found at 27 to 142 (RSLEVGTVMT…WIKGLTWLME (116 aa)). An EF-hand domain is found at 152–187 (QIERWLRKQFYSVDRNREDRISAKDLKNMLSQVNYR). Ca(2+) is bound by residues D165, N167, E169, R171, and D176. The PI-PLC X-box domain maps to 320 to 464 (ETMNNPLSHY…LKRKILIKHK (145 aa)). Catalysis depends on residues H335 and H380. In terms of domain architecture, PH 2; first part spans 489-523 (SIKNGILYLEDPVNHEWYPHYFVLTSSKIYYSEET). A Phosphotyrosine modification is found at Y506. The segment at 522–546 (ETSSDQGNEDEEEPKEASGSTELHS) is disordered. SH2 domains lie at 550-657 (WFHG…SEPV) and 668-756 (WYHA…RYPI). Y771 is modified (phosphotyrosine; by SYK). Residue Y775 is modified to Phosphotyrosine. Phosphotyrosine; by ITK, SYK and TXK is present on Y783. Residues 791-851 (TFKCAVKALF…PSNYVEEMIN (61 aa)) enclose the SH3 domain. Residues 895–931 (FVFSISMPSVAQWSLDVAADSQEELQDWVKKIREVAQ) enclose the PH 2; second part domain. Positions 953 to 1070 (LSELVVYCRP…GYVLQPSTMR (118 aa)) constitute a PI-PLC Y-box domain. Y977 carries the post-translational modification Phosphotyrosine. The 124-residue stretch at 1071 to 1194 (DEAFDPFDKS…TGYRAVPLKN (124 aa)) folds into the C2 domain. S1221, S1227, S1233, and S1248 each carry phosphoserine. Y1253 bears the Phosphotyrosine mark. S1263 bears the Phosphoserine mark. The interval 1271-1290 (FDSRERRAPRRTRVNGDNRL) is disordered.

In terms of assembly, interacts with AGAP2 via its SH3 domain. Interacts (via SH2 domain) with RET. Interacts with FLT1 (tyrosine-phosphorylated). Interacts (via SH2 domain) with FGFR1, FGFR2, FGFR3 and FGFR4 (phosphorylated). Interacts with LAT (phosphorylated) upon TCR activation. Interacts (via SH3 domain) with the Pro-rich domain of TNK1. Associates with BLNK, VAV1, GRB2 and NCK1 in a B-cell antigen receptor-dependent fashion. Interacts with CBLB in activated T-cells; which inhibits phosphorylation. Interacts with SHB. Interacts (via SH3 domain) with the Arg/Gly-rich-flanked Pro-rich domains of KHDRBS1/SAM68. This interaction is selectively regulated by arginine methylation of KHDRBS1/SAM68. Interacts with INPP5D/SHIP1, THEMIS and CLNK. Interacts with AXL, FLT4 and KIT. Interacts with RALGPS1. Interacts (via the SH2 domains) with VIL1 (phosphorylated at C-terminus tyrosine phosphorylation sites). Interacts (via SH2 domain) with PDGFRA and PDGFRB (tyrosine phosphorylated). Interacts with PIP5K1C. Interacts with NTRK1 and NTRK2 (phosphorylated upon ligand-binding). Interacts with SYK; activates PLCG1. Interacts with GRB2, LAT and THEMIS upon TCR activation in thymocytes. Interacts with TESPA1; the association is increased with prolonged stimulation of the TCR and may facilitate the assembly of the LAT signalosome. Interacts (via C-terminal proline-rich domain (PRD)) with PLCG1 (via SH3 domain); this interaction leads to guanine nucleotide exchange from PlCG1 to DNM1 and enhances DNM1-dependent endocytosis. Ca(2+) serves as cofactor. Post-translationally, ubiquitinated by CBLB in activated T-cells. In terms of processing, tyrosine phosphorylated in response to signaling via activated FLT3, KIT and PDGFRA. Tyrosine phosphorylated by activated FGFR1, FGFR2, FGFR3 and FGFR4. Tyrosine phosphorylated by activated FLT1 and KDR. Tyrosine phosphorylated by activated PDGFRB. The receptor-mediated activation of PLCG1 involves its phosphorylation by tyrosine kinases, in response to ligation of a variety of growth factor receptors and immune system receptors. For instance, SYK phosphorylates and activates PLCG1 in response to ligation of the B-cell receptor. May be dephosphorylated by PTPRJ. Phosphorylated by ITK and TXK on Tyr-783 upon TCR activation in T-cells.

It is found in the cell projection. The protein resides in the lamellipodium. The protein localises to the ruffle. The enzyme catalyses a 1,2-diacyl-sn-glycero-3-phospho-(1D-myo-inositol-4,5-bisphosphate) + H2O = 1D-myo-inositol 1,4,5-trisphosphate + a 1,2-diacyl-sn-glycerol + H(+). It catalyses the reaction a 1,2-diacyl-sn-glycero-3-phospho-(1D-myo-inositol) + H2O = 1D-myo-inositol 1-phosphate + a 1,2-diacyl-sn-glycerol + H(+). Its activity is regulated as follows. Activated by phosphorylation on tyrosine residues. In terms of biological role, mediates the production of the second messenger molecules diacylglycerol (DAG) and inositol 1,4,5-trisphosphate (IP3). Plays an important role in the regulation of intracellular signaling cascades. Becomes activated in response to ligand-mediated activation of receptor-type tyrosine kinases, such as PDGFRA, PDGFRB, EGFR, FGFR1, FGFR2, FGFR3 and FGFR4. Plays a role in actin reorganization and cell migration. Guanine nucleotide exchange factor that binds the GTPase DNM1 and catalyzes the dissociation of GDP, allowing a GTP molecule to bind in its place, therefore enhancing DNM1-dependent endocytosis. This chain is 1-phosphatidylinositol 4,5-bisphosphate phosphodiesterase gamma-1, found in Rattus norvegicus (Rat).